A 37-amino-acid chain; its full sequence is Large ribosomal subunit protein bL36 (37 aa).

It belongs to the bacterial ribosomal protein bL36 family.

This chain is Large ribosomal subunit protein bL36, found in Dehalococcoides mccartyi (strain ATCC BAA-2266 / KCTC 15142 / 195) (Dehalococcoides ethenogenes (strain 195)).